Consider the following 393-residue polypeptide: NAD(P)H-quinone oxidoreductase subunit H, chloroplastic (393 aa).

It belongs to the complex I 49 kDa subunit family. In terms of assembly, NDH is composed of at least 16 different subunits, 5 of which are encoded in the nucleus.

It localises to the plastid. The protein localises to the chloroplast thylakoid membrane. It carries out the reaction a plastoquinone + NADH + (n+1) H(+)(in) = a plastoquinol + NAD(+) + n H(+)(out). It catalyses the reaction a plastoquinone + NADPH + (n+1) H(+)(in) = a plastoquinol + NADP(+) + n H(+)(out). NDH shuttles electrons from NAD(P)H:plastoquinone, via FMN and iron-sulfur (Fe-S) centers, to quinones in the photosynthetic chain and possibly in a chloroplast respiratory chain. The immediate electron acceptor for the enzyme in this species is believed to be plastoquinone. Couples the redox reaction to proton translocation, and thus conserves the redox energy in a proton gradient. In Jasminum nudiflorum (Winter jasmine), this protein is NAD(P)H-quinone oxidoreductase subunit H, chloroplastic.